The primary structure comprises 122 residues: Small ribosomal subunit protein uS13 (122 aa).

Residues 95 to 122 (GLPVHGQRTHTNARTRKGPRRGAVGKKK) form a disordered region.

Belongs to the universal ribosomal protein uS13 family. As to quaternary structure, part of the 30S ribosomal subunit. Forms a loose heterodimer with protein S19. Forms two bridges to the 50S subunit in the 70S ribosome.

In terms of biological role, located at the top of the head of the 30S subunit, it contacts several helices of the 16S rRNA. In the 70S ribosome it contacts the 23S rRNA (bridge B1a) and protein L5 of the 50S subunit (bridge B1b), connecting the 2 subunits; these bridges are implicated in subunit movement. Contacts the tRNAs in the A and P-sites. The chain is Small ribosomal subunit protein uS13 from Desulfovibrio desulfuricans (strain ATCC 27774 / DSM 6949 / MB).